Reading from the N-terminus, the 570-residue chain is Protein misato homolog 1 (570 aa).

Ser495 is modified (phosphoserine).

This sequence belongs to the misato family.

It is found in the mitochondrion outer membrane. The protein localises to the cytoplasm. Involved in the regulation of mitochondrial distribution and morphology. Required for mitochondrial fusion and mitochondrial network formation. The polypeptide is Protein misato homolog 1 (MSTO1) (Pongo pygmaeus (Bornean orangutan)).